We begin with the raw amino-acid sequence, 189 residues long: Phosphoheptose isomerase (189 aa).

In terms of domain architecture, SIS spans 34-189 (LADSLAGGRK…CDLVEKRLFP (156 aa)). Residue 49–51 (NGG) coordinates substrate. Zn(2+)-binding residues include His-58 and Glu-62. Residues Glu-62, 91 to 92 (ND), 117 to 119 (STS), Ser-122, and Gln-169 contribute to the substrate site. Positions 169 and 177 each coordinate Zn(2+).

Belongs to the SIS family. GmhA subfamily. In terms of assembly, homotetramer. Zn(2+) serves as cofactor.

It is found in the cytoplasm. The enzyme catalyses 2 D-sedoheptulose 7-phosphate = D-glycero-alpha-D-manno-heptose 7-phosphate + D-glycero-beta-D-manno-heptose 7-phosphate. Its pathway is carbohydrate biosynthesis; D-glycero-D-manno-heptose 7-phosphate biosynthesis; D-glycero-alpha-D-manno-heptose 7-phosphate and D-glycero-beta-D-manno-heptose 7-phosphate from sedoheptulose 7-phosphate: step 1/1. In terms of biological role, catalyzes the isomerization of sedoheptulose 7-phosphate in D-glycero-D-manno-heptose 7-phosphate. This Geobacter sulfurreducens (strain ATCC 51573 / DSM 12127 / PCA) protein is Phosphoheptose isomerase.